The primary structure comprises 272 residues: Merozoite surface protein 2 (272 aa).

Positions 1–20 (MKVIKTLSIINFFIFVTFNI) are cleaved as a signal peptide. 2 N-linked (GlcNAc...) asparagine glycosylation sites follow: Asn-22 and Asn-36. Positions 44–198 (AESKPSTGAG…EQTESPELQS (155 aa)) are polymorphic region. The tract at residues 45-233 (ESKPSTGAGG…DSQKECTDGN (189 aa)) is disordered. Gly residues predominate over residues 51-82 (GAGGSAGGSAGGSAGGSAGGSAGGSAGSGDGN). 6 repeat units span residues 53–56 (GGSA), 57–60 (GGSA), 61–64 (GGSA), 65–68 (GGSA), 69–72 (GGSA), and 73–76 (GGSA). Residues 53–76 (GGSAGGSAGGSAGGSAGGSAGGSA) form a 6 X 4 AA tandem repeats of G-G-S-A region. Low complexity predominate over residues 83–119 (GADAEGSSSTPATTTTTKTTTTTTTTNDAEASTSTSS). The span at 122–137 (PNHKNAETNPKGKGEV) shows a compositional bias: basic and acidic residues. Polar residues-rich tracts occupy residues 139–165 (EPNQ…NVPP) and 172–200 (KSPT…QSAP). Asn-149 carries an N-linked (GlcNAc...) asparagine glycan. A glycan (N-linked (GlcNAc...) asparagine) is linked at Asn-221. Cys-229 and Cys-237 are joined by a disulfide. N-linked (GlcNAc...) asparagine glycosylation is found at Asn-245 and Asn-246. A lipid anchor (GPI-anchor amidated asparagine) is attached at Asn-246. Residues 247-272 (SSNIASINKFVVLISATLVLSFAIFI) constitute a propeptide, removed in mature form.

The protein localises to the cell membrane. In terms of biological role, may play a role in the merozoite attachment to the erythrocyte. This chain is Merozoite surface protein 2, found in Plasmodium falciparum (isolate 3D7).